A 359-amino-acid chain; its full sequence is UDP-N-acetylglucosamine--N-acetylmuramyl-(pentapeptide) pyrophosphoryl-undecaprenol N-acetylglucosamine transferase (359 aa).

Residues 15 to 17 (TGG), Asn127, Arg166, Ser191, Ile245, 264 to 269 (ALTVSE), and Gln290 contribute to the UDP-N-acetyl-alpha-D-glucosamine site.

It belongs to the glycosyltransferase 28 family. MurG subfamily.

The protein localises to the cell inner membrane. It carries out the reaction di-trans,octa-cis-undecaprenyl diphospho-N-acetyl-alpha-D-muramoyl-L-alanyl-D-glutamyl-meso-2,6-diaminopimeloyl-D-alanyl-D-alanine + UDP-N-acetyl-alpha-D-glucosamine = di-trans,octa-cis-undecaprenyl diphospho-[N-acetyl-alpha-D-glucosaminyl-(1-&gt;4)]-N-acetyl-alpha-D-muramoyl-L-alanyl-D-glutamyl-meso-2,6-diaminopimeloyl-D-alanyl-D-alanine + UDP + H(+). It functions in the pathway cell wall biogenesis; peptidoglycan biosynthesis. In terms of biological role, cell wall formation. Catalyzes the transfer of a GlcNAc subunit on undecaprenyl-pyrophosphoryl-MurNAc-pentapeptide (lipid intermediate I) to form undecaprenyl-pyrophosphoryl-MurNAc-(pentapeptide)GlcNAc (lipid intermediate II). This Pseudomonas putida (strain ATCC 700007 / DSM 6899 / JCM 31910 / BCRC 17059 / LMG 24140 / F1) protein is UDP-N-acetylglucosamine--N-acetylmuramyl-(pentapeptide) pyrophosphoryl-undecaprenol N-acetylglucosamine transferase.